Here is a 260-residue protein sequence, read N- to C-terminus: Neurotrophin-3 (260 aa).

A signal peptide spans 1 to 18 (MSILFYVMFLPYLCGIHA). Residues 19 to 141 (TNMDKRNLPE…VNNRTSRRKR (123 aa)) constitute a propeptide that is removed on maturation. Residue asparagine 134 is glycosylated (N-linked (GlcNAc...) asparagine). Cystine bridges form between cysteine 155-cysteine 220, cysteine 198-cysteine 249, and cysteine 208-cysteine 251.

It belongs to the NGF-beta family.

The protein resides in the secreted. Its function is as follows. Seems to promote the survival of visceral and proprioceptive sensory neurons. The polypeptide is Neurotrophin-3 (ntf3) (Xenopus laevis (African clawed frog)).